The following is a 283-amino-acid chain: DNA repair protein RecO (283 aa).

This sequence belongs to the RecO family.

In terms of biological role, involved in DNA repair and RecF pathway recombination. This chain is DNA repair protein RecO, found in Gloeothece citriformis (strain PCC 7424) (Cyanothece sp. (strain PCC 7424)).